The chain runs to 101 residues: Small ribosomal subunit protein uS14 (101 aa).

The segment covering 1–11 (MAKKSSVEKNN) has biased composition (basic and acidic residues). The segment at 1–22 (MAKKSSVEKNNRRQRMVKNAAA) is disordered. Residues 12-22 (RRQRMVKNAAA) show a composition bias toward basic residues.

This sequence belongs to the universal ribosomal protein uS14 family. Part of the 30S ribosomal subunit. Contacts proteins S3 and S10.

Its function is as follows. Binds 16S rRNA, required for the assembly of 30S particles and may also be responsible for determining the conformation of the 16S rRNA at the A site. In Afipia carboxidovorans (strain ATCC 49405 / DSM 1227 / KCTC 32145 / OM5) (Oligotropha carboxidovorans), this protein is Small ribosomal subunit protein uS14.